We begin with the raw amino-acid sequence, 243 residues long: MQFRLFSFALIILNCMDYSHCQGNRWRRSKRASYVSNPICKGCLSCSKDNGCSRCQQKLFFFLRREGMRQYGECLHSCPSGYYGHRAPDMNRCARCRIENCDSCFSKDFCTKCKVGFYLHRGRCFDECPDGFAPLEETMECVEGCEVGHWSEWGTCSRNNRTCGFKWGLETRTRQIVKKPVKDTILCPTIAESRRCKMTMRHCPGGKRTPKAKEKRNKKKKRKLIERAQEQHSVFLATDRANQ.

The first 21 residues, 1–21 (MQFRLFSFALIILNCMDYSHC), serve as a signal peptide directing secretion. Intrachain disulfides connect cysteine 40–cysteine 46, cysteine 43–cysteine 52, cysteine 55–cysteine 74, cysteine 78–cysteine 93, cysteine 96–cysteine 104, cysteine 101–cysteine 110, cysteine 113–cysteine 124, cysteine 128–cysteine 141, cysteine 145–cysteine 187, cysteine 156–cysteine 163, and cysteine 196–cysteine 203. Residues 90 to 134 (MNRCARCRIENCDSCFSKDFCTKCKVGFYLHRGRCFDECPDGFAP) form an FU repeat. The TSP type-1 domain maps to 144-204 (GCEVGHWSEW…RCKMTMRHCP (61 aa)). An N-linked (GlcNAc...) asparagine glycan is attached at asparagine 160. The span at 204–224 (PGGKRTPKAKEKRNKKKKRKL) shows a compositional bias: basic residues. Residues 204–243 (PGGKRTPKAKEKRNKKKKRKLIERAQEQHSVFLATDRANQ) form a disordered region.

The protein belongs to the R-spondin family. Interacts with WNT1. Binds heparin. Interacts with LGR4, LGR5 and LGR6. Interacts with E3 ubiquitin ligases RNF43 and ZNRF3.

The protein resides in the secreted. Activator of the canonical Wnt signaling pathway by acting as a ligand for LGR4-6 receptors. Upon binding to LGR4-6 (LGR4, LGR5 or LGR6), LGR4-6 associate with phosphorylated LRP6 and frizzled receptors that are activated by extracellular Wnt receptors, triggering the canonical Wnt signaling pathway to increase expression of target genes. Also regulates the canonical Wnt/beta-catenin-dependent pathway and non-canonical Wnt signaling by acting as an inhibitor of ZNRF3, an important regulator of the Wnt signaling pathway. During embryonic development, plays a crucial role in limb specification, amplifying the Wnt signaling pathway independently of LGR4-6 receptors, possibly by acting as a direct antagonistic ligand to RNF43 and ZNRF3, hence governing the number of limbs an embryo should form. The protein is R-spondin-2 (RSPO2) of Homo sapiens (Human).